The primary structure comprises 275 residues: NH(3)-dependent NAD(+) synthetase (275 aa).

46 to 53 is a binding site for ATP; the sequence is GISGGQDS. Asp-52 serves as a coordination point for Mg(2+). Arg-140 contacts deamido-NAD(+). ATP is bound at residue Thr-160. Glu-165 provides a ligand contact to Mg(2+). Residues Lys-173 and Asp-180 each contribute to the deamido-NAD(+) site. Residues Lys-189 and Thr-211 each contribute to the ATP site. Position 260 to 261 (260 to 261) interacts with deamido-NAD(+); sequence HK.

It belongs to the NAD synthetase family. In terms of assembly, homodimer.

The catalysed reaction is deamido-NAD(+) + NH4(+) + ATP = AMP + diphosphate + NAD(+) + H(+). The protein operates within cofactor biosynthesis; NAD(+) biosynthesis; NAD(+) from deamido-NAD(+) (ammonia route): step 1/1. Catalyzes the ATP-dependent amidation of deamido-NAD to form NAD. Uses ammonia as a nitrogen source. This chain is NH(3)-dependent NAD(+) synthetase, found in Escherichia coli O139:H28 (strain E24377A / ETEC).